The primary structure comprises 704 residues: PHD finger protein MALE MEIOCYTE DEATH 1 (704 aa).

Residues methionine 606–glutamate 656 form a PHD-type zinc finger. The Zn(2+) site is built by cysteine 609, cysteine 611, cysteine 624, cysteine 627, histidine 632, cysteine 635, cysteine 650, and cysteine 653.

As to quaternary structure, interacts with JMJ16 in the nucleus of male meiocytes, especially on pachytene chromosomes. Expressed in inflorescence, specifically in male meiocytes.

It localises to the nucleus. Functionally, probable transcription factor required for chromosome organization and progression during male meiosis (e.g. microsporogenesis). Necessary for fertility and meiotic progressive compaction of prophase I chromosomes to metaphase I bivalents. Together with JMJ16, promotes gene expression in male meiocytes in an H3K9me3-dependent manner, and contributes to meiotic chromosome condensation by triggering some condensin promoters (e.g. CAP-D3 and CAP-H). In Arabidopsis thaliana (Mouse-ear cress), this protein is PHD finger protein MALE MEIOCYTE DEATH 1.